The following is a 223-amino-acid chain: Superoxide dismutase [Mn], mitochondrial (223 aa).

The transit peptide at 1–24 (MNLIIGVAGRLLVGKNYCLNTQRL) directs the protein to the mitochondrion. His50, His98, Asp184, and His188 together coordinate Mn(2+).

The protein belongs to the iron/manganese superoxide dismutase family. Homotetramer. The cofactor is Mn(2+).

The protein localises to the mitochondrion matrix. The enzyme catalyses 2 superoxide + 2 H(+) = H2O2 + O2. Functionally, destroys superoxide anion radicals which are normally produced within the cells and which are toxic to biological systems. The sequence is that of Superoxide dismutase [Mn], mitochondrial (sod-2) from Onchocerca volvulus.